Here is a 577-residue protein sequence, read N- to C-terminus: MNIQALLSEKVRQAMIAAGAPADCEPQVRQSAKVQFGNYQANGMMAVAKKLGMAPRQLAEQVLTHLDLNGIASKVEIAGPGFINIFLDPAFLAEHVQQALASDRLGVAMPEKQTIVVDYSAPNVAKEMHVGHLRSTIIGDAAVRTLEFLGHKVIRANHVGDWGTQFGMLIAWLEKQQQENAGEMELADLEGFYRDAKKHYDEDEEFAERARNYVVKLQSGDEYFREMWRKLVDITMTQNQITYDRLNVTLTRDDVMGESLYNPMLPGIVADLKAKGLAVESEGATVVFLDEFKNKEGEPMGVIIQKKDGGYLYTTTDIACAKYRYETLHADRVLYYIDSRQHQHLMQAWAIVRKAGYVPESVPLEHHMFGMMLGKDGKPFKTRAGGTVKLADLLDEALERARRLVAEKNPDMPADELEKLANAVGIGAVKYADLSKNRTTDYIFDWDNMLAFEGNTAPYMQYAYTRVLSVFRKAEIDEEQLAAAPVIIREDREAQLAARLLQFEETLTVVAREGTPHVMCAYLYDLAGLFSGFYEHCPILSAENEEVRNSRLKLAQLTAKTLKLGLDTLGIETVERM.

The short motif at 122-132 (PNVAKEMHVGH) is the 'HIGH' region element.

Belongs to the class-I aminoacyl-tRNA synthetase family. Monomer.

Its subcellular location is the cytoplasm. The catalysed reaction is tRNA(Arg) + L-arginine + ATP = L-arginyl-tRNA(Arg) + AMP + diphosphate. In Escherichia coli O1:K1 / APEC, this protein is Arginine--tRNA ligase.